The chain runs to 230 residues: Ubiquitin carboxyl-terminal hydrolase isozyme L3 (230 aa).

The 225-residue stretch at 5–229 folds into the UCH catalytic domain; sequence RWLPLEANPE…LRFNAIALSA (225 aa). Residues 8 to 13 form an interaction with ubiquitin region; it reads PLEANP. The Nucleophile role is filled by C95. S130 carries the post-translational modification Phosphoserine. The interval 152 to 159 is interaction with ubiquitin. Crossover loop which restricts access of large ubiquitin adducts to the active site; it reads AHEGQTEA. Catalysis depends on H169, which acts as the Proton donor. The segment at 219–224 is interaction with ubiquitin; it reads ELRFNA.

This sequence belongs to the peptidase C12 family. As to quaternary structure, preferentially binds diubiquitin; the interaction does not hydrolyze diubiquitin but, in vitro, inhibits the hydrolyzing activity on other substrates.

The protein resides in the cytoplasm. It catalyses the reaction Thiol-dependent hydrolysis of ester, thioester, amide, peptide and isopeptide bonds formed by the C-terminal Gly of ubiquitin (a 76-residue protein attached to proteins as an intracellular targeting signal).. Inhibited by monoubiquitin and diubiquitin. Deubiquitinating enzyme (DUB) that controls levels of cellular ubiquitin through processing of ubiquitin precursors and ubiquitinated proteins. Thiol protease that recognizes and hydrolyzes a peptide bond at the C-terminal glycine of either ubiquitin or NEDD8. Has a 10-fold preference for Arg and Lys at position P3, and exhibits a preference towards 'Lys-48'-linked ubiquitin chains. Deubiquitinates ENAC in apical compartments, thereby regulating apical membrane recycling. Indirectly increases the phosphorylation of IGFIR, AKT and FOXO1 and promotes insulin-signaling and insulin-induced adipogenesis. Required for stress-response retinal, skeletal muscle and germ cell maintenance. May be involved in working memory. Can hydrolyze UBB(+1), a mutated form of ubiquitin which is not effectively degraded by the proteasome. The sequence is that of Ubiquitin carboxyl-terminal hydrolase isozyme L3 (UCHL3) from Sus scrofa (Pig).